The primary structure comprises 53 residues: Rubredoxin 3 (53 aa).

Residues 1 to 53 (MQKWVCVPCGYEYDPADGDPENGIEPGTAFEDLPEDWVCPVCGVDKSFFEPVS) enclose the Rubredoxin-like domain. Fe cation contacts are provided by Cys6, Cys9, Cys39, and Cys42.

This sequence belongs to the rubredoxin family. In terms of assembly, monomer. Fe(3+) serves as cofactor.

Functions as an electron acceptor for pyruvate ferredoxin oxidoreductase (PFOR). The protein is Rubredoxin 3 (rub3) of Chlorobaculum tepidum (strain ATCC 49652 / DSM 12025 / NBRC 103806 / TLS) (Chlorobium tepidum).